The primary structure comprises 102 residues: MVPLILLILLFSKFSTFLRPVNHVLVTKYTAIVNTKWQTTPSIIDVTYTMHVFYMTIILILVRKQMQSIHAFLGSLCLPSHVLDFSIVRDILSWYFLETVAV.

3 helical membrane passes run 1 to 21 (MVPL…LRPV), 42 to 62 (SIID…LILV), and 68 to 88 (SIHA…FSIV).

The protein resides in the membrane. This is an uncharacterized protein from Saccharomyces cerevisiae (strain ATCC 204508 / S288c) (Baker's yeast).